Here is a 44-residue protein sequence, read N- to C-terminus: Diuretic hormone (44 aa).

At V44 the chain carries Valine amide.

Its subcellular location is the secreted. Regulation of fluid secretion. Stimulates primary urine secretion by Malpighian tubules and causes a dose-dependent stimulation of cAMP levels in the tubules. May act as clearance peptide in that it may remove metabolic waste from the hemolymph. This chain is Diuretic hormone, found in Stomoxys calcitrans (Stable fly).